We begin with the raw amino-acid sequence, 349 residues long: DNA polymerase IV (349 aa).

Residues 7–188 form the UmuC domain; it reads IIHIDMDYFF…LPVKKLFGVG (182 aa). D11 and D106 together coordinate Mg(2+). The active site involves E107.

It belongs to the DNA polymerase type-Y family. Monomer. Mg(2+) is required as a cofactor.

Its subcellular location is the cytoplasm. The catalysed reaction is DNA(n) + a 2'-deoxyribonucleoside 5'-triphosphate = DNA(n+1) + diphosphate. In terms of biological role, poorly processive, error-prone DNA polymerase involved in untargeted mutagenesis. Copies undamaged DNA at stalled replication forks, which arise in vivo from mismatched or misaligned primer ends. These misaligned primers can be extended by PolIV. Exhibits no 3'-5' exonuclease (proofreading) activity. May be involved in translesional synthesis, in conjunction with the beta clamp from PolIII. The sequence is that of DNA polymerase IV from Francisella tularensis subsp. holarctica (strain FTNF002-00 / FTA).